Reading from the N-terminus, the 547-residue chain is Auxin transporter-like protein 3 (547 aa).

The Cytoplasmic portion of the chain corresponds to 1 to 74; that stretch reads MASGSSGGGY…DAWFSCASNQ (74 aa). A helical membrane pass occupies residues 75-92; that stretch reads VAQVLLTLPYSFAQLGMA. Topologically, residues 93-94 are extracellular; sequence SG. A helical membrane pass occupies residues 95 to 115; it reads LLFQLFYGLLGSWTAYLISIL. Over 116-151 the chain is Cytoplasmic; the sequence is YLEYRTRKERDKVDFRNHVIQWFEVLDGLLGRHWRN. Residues 152–172 form a helical membrane-spanning segment; it reads VGLAFNCTFLLFGSVIQLIGC. Topologically, residues 173–187 are extracellular; sequence ASNIYYINDHLDKRT. Residues 188–208 traverse the membrane as a helical segment; the sequence is WTYIFGACCATTVFIPSFHNY. Over 209-211 the chain is Cytoplasmic; the sequence is RIW. Residues 212 to 232 form a helical membrane-spanning segment; the sequence is SFLGLLMTTYTAWYIAVASLI. At 233–247 the chain is on the extracellular side; sequence HGQVEGVAHSGPTSI. A helical transmembrane segment spans residues 248–268; that stretch reads VLYFTGATNILYTFGGHAVTV. The Cytoplasmic portion of the chain corresponds to 269 to 281; that stretch reads EIMHAMWRPQKFK. The helical transmembrane segment at 282–302 threads the bilayer; the sequence is AIYLLATVYVLTLTLPSASAA. The Extracellular portion of the chain corresponds to 303–329; the sequence is YWAFGDALLTHSNALALLPRTPWRDAA. The helical transmembrane segment at 330-350 threads the bilayer; it reads VVLMLIHQFITFGFACTPLYF. Residues 351-371 lie on the Cytoplasmic side of the membrane; that stretch reads VWEKLVGLHGCPSLCKRAAAR. A helical transmembrane segment spans residues 372-392; that stretch reads LPVVLPIWFLAIIFPFFGPIN. Position 393 (serine 393) is a topological domain, extracellular. The helical transmembrane segment at 394–414 threads the bilayer; the sequence is AVGSLLVSFTVYIIPSLAYMV. At 415-440 the chain is on the cytoplasmic side; it reads TFRSPQSRQNAVERPPRFAGGWTGAY. The helical transmembrane segment at 441–461 threads the bilayer; it reads VINSFVVAWVLVVGFGFGGWA. Residues 462–547 are Extracellular-facing; sequence SITNFVHQVD…HHHRHHRHGL (86 aa). An N-linked (GlcNAc...) asparagine glycan is attached at asparagine 509.

It belongs to the amino acid/polyamine transporter 2 family. Amino acid/auxin permease (AAAP) (TC 2.A.18.1) subfamily.

Its subcellular location is the cell membrane. Carrier protein involved in proton-driven auxin influx. May mediate the formation of auxin gradient from developing leaves (site of auxin biosynthesis) to tips. This Oryza sativa subsp. japonica (Rice) protein is Auxin transporter-like protein 3.